The primary structure comprises 351 residues: MKNSNKLIASVVTLASVMALAACQSTNDNTKVISMKGDTISVSDFYNETKNTEVSQKAMLNLVISRVFEAQYGDKVSKKEVEKAYHKTAEQYGASFSAALAQSSLTPETFKRQIRSSKLVEHAVKEAAKKELTTQEYKKAYESYTPTMAVEMITLDNEETAKSVLEELKAEGADFTAIAKEKTTTPEKKVTYKFDSGATNVPTDVVKAASSLNEGGISDVISVLDPTSYQKKFYIVKVTKKAEKKSDWQEYKKRLKAIIIAEKSKDMNFQNKVIANALDKANVKIKDKAFANILAQYANLGQKTKAASESSTTSESSKAAEENPSESEQTQTSSAEEPTETEAQTQEPAAQ.

The signal sequence occupies residues 1–22 (MKNSNKLIASVVTLASVMALAA). C23 carries N-palmitoyl cysteine lipidation. C23 carries the S-diacylglycerol cysteine lipid modification. Residues 145-240 (TPTMAVEMIT…KKFYIVKVTK (96 aa)) enclose the PpiC domain. Composition is skewed to low complexity over residues 303 to 317 (KTKAASESSTTSESS) and 326 to 351 (ESEQTQTSSAEEPTETEAQTQEPAAQ). Residues 303-351 (KTKAASESSTTSESSKAAEENPSESEQTQTSSAEEPTETEAQTQEPAAQ) are disordered.

The protein belongs to the PrsA family.

It localises to the cell membrane. The catalysed reaction is [protein]-peptidylproline (omega=180) = [protein]-peptidylproline (omega=0). Functionally, plays a major role in protein secretion by helping the post-translocational extracellular folding of several secreted proteins. The sequence is that of Foldase protein PrsA 1 from Streptococcus pyogenes serotype M6 (strain ATCC BAA-946 / MGAS10394).